A 590-amino-acid chain; its full sequence is Aspartate--tRNA(Asp/Asn) ligase (590 aa).

Glu-178 contributes to the L-aspartate binding site. Positions 202–205 (QIYK) are aspartate. Arg-224 provides a ligand contact to L-aspartate. Residues 224 to 226 (RDE) and Gln-233 each bind ATP. His-453 lines the L-aspartate pocket. Glu-487 serves as a coordination point for ATP. Arg-494 contributes to the L-aspartate binding site. 539 to 542 (GLDR) lines the ATP pocket.

The protein belongs to the class-II aminoacyl-tRNA synthetase family. Type 1 subfamily. As to quaternary structure, homodimer.

Its subcellular location is the cytoplasm. The catalysed reaction is tRNA(Asx) + L-aspartate + ATP = L-aspartyl-tRNA(Asx) + AMP + diphosphate. In terms of biological role, aspartyl-tRNA synthetase with relaxed tRNA specificity since it is able to aspartylate not only its cognate tRNA(Asp) but also tRNA(Asn). Reaction proceeds in two steps: L-aspartate is first activated by ATP to form Asp-AMP and then transferred to the acceptor end of tRNA(Asp/Asn). The sequence is that of Aspartate--tRNA(Asp/Asn) ligase from Treponema denticola (strain ATCC 35405 / DSM 14222 / CIP 103919 / JCM 8153 / KCTC 15104).